The primary structure comprises 989 residues: MADSGDKSQGMRPPPFDSRGHPLPRRASPDKSITLENHRLARDTSSRVTSSSALGVTESQPQLKSSPTRRNSSGESEPTNWFNQSNRNPAAAFHDESHIMEVDPPFYQKETDSSNEESRYPPGRNPVHPPGGVQLPGFRPVAAHSSAADDYRSVIDDLTVENKRLKEELKRYKQFGSDVMRKEKLFEIKVHGLPRRKKRELEATLRDFAASLGDSSESTSQRRKTGRHGTAVHSSGVSLSKHDSSSSSRSRPVDSAYNSMSTGRSSHAPHSSGPSLGRPSLTRAKSVGTQKVENYLRDTPDGLLPHHIVMTDKEKKKLVVRRLEQLFTGKISGRNMQRNQSMPSMDAPLAPEGTNMAPPRPPPEGLREACIQLQDGDNPRKNRSSKDNGSASNSGGDQTELGGTGTGSGDGSGSGGRTGNNTSPPGAIAPDQRPTRPRDLDPDRVQIPSENMDYIRHLGLVSPEFLQGSRTSYQDVAPDAEGWVYLNLLCNLAQLHMVNVTPSFIRQAVSEKSTKFQLSADGRKIRWRGGTDGTKFSSDSSEDKSQQSPMTEDTEDGSDKNGRRKKRKTQQASSEIGRFGPSRSPSDTFHYKPMFVHRNSSSIETSLEESMSQGSEDAVDESNMGNSKWDFSGSGTTQQRRKRRYDGAIVYYTGAPFCTDLSGDPGDMSPTAQMTAGREVEGSGSGDEVEHVLQRTLSGSSLPIRPLSDDRARVAEVLDFDPGNPPELVADDGSSPNDEDFVFPWCEDPAKVRIQPIAKEVMEPSGLGGVLPDDHFVMLVTTRRVVRPILQRQLSRSTTSEDTAEFIAERLAAIRTSSPLPPRSHRLTVAPLQVEYVSGQFRRLNPAPLPPPAIFYPPFSTDSSWDDGDDLASDDEEVEEVEEDSYSEGQISRRANPHFSDNNTYMRKDDLAFDTETDVRMDSDDNRLSDSGHNMRAMMPRAEAVDGDDSPLAAVTGKEVDMLHTGSSVATAGGAESGYSSSMEDVSSS.

3 disordered regions span residues 1 to 139 (MADS…PGFR), 208 to 290 (FAAS…VGTQ), and 331 to 445 (ISGR…PDRV). The span at 36-45 (ENHRLARDTS) shows a compositional bias: basic and acidic residues. Positions 46-88 (SRVTSSSALGVTESQPQLKSSPTRRNSSGESEPTNWFNQSNRN) are enriched in polar residues. A compositionally biased stretch (basic and acidic residues) spans 109 to 119 (KETDSSNEESR). Over residues 233–255 (HSSGVSLSKHDSSSSSRSRPVDS) the composition is skewed to low complexity. Composition is skewed to polar residues over residues 256–274 (AYNSMSTGRSSHAPHSSGP) and 334–343 (RNMQRNQSMP). Basic and acidic residues predominate over residues 377-386 (DNPRKNRSSK). Polar residues predominate over residues 387–397 (DNGSASNSGGD). The segment covering 402-418 (GGTGTGSGDGSGSGGRT) has biased composition (gly residues). Residues 433 to 444 (RPTRPRDLDPDR) are compositionally biased toward basic and acidic residues. Position 501 is a phosphothreonine (threonine 501). Phosphoserine occurs at positions 513 and 519. Disordered regions lie at residues 524-642 (KIRW…QRRK), 865-907 (WDDG…TYMR), and 968-989 (SVATAGGAESGYSSSMEDVSSS). The Nuclear localization signal motif lies at 564-568 (RKKRK). Over residues 598-615 (RNSSSIETSLEESMSQGS) the composition is skewed to polar residues. Positions 865–886 (WDDGDDLASDDEEVEEVEEDSY) are enriched in acidic residues. Residues 978–989 (GYSSSMEDVSSS) are compositionally biased toward polar residues.

Belongs to the FRQ family. Progressive phosphorylation during the late circadian day and early night. Phosphorylation is also involved in regulating frq degradation. Phosphorylation by CKII may have at least three functions; it decreases the stability of frq, reduces the protein complex formation between frq and the white collar proteins, and is important for the closing of the Neurospora circadian negative feedback loop.

The protein resides in the nucleus. Its function is as follows. Circadian clock component involved in the generation of biological rhythms, in particular in rhythm stability, period length, and temperature compensation. Oscillates in abundance with a daily peak early in the morning. Behaves as a negative element in circadian transcriptional loop. May bind to wc-2 protein. The complex frq-wc-2 may turn off the expression of frq. This is Frequency clock protein (frq) from Neurospora crassa (strain ATCC 24698 / 74-OR23-1A / CBS 708.71 / DSM 1257 / FGSC 987).